The sequence spans 230 residues: Fibronectin type III domain-containing protein 4 (230 aa).

Positions 1 to 40 (MPGCLPADSVGTMASLMPLSPYLSPTVLLLVSCDLGFVRA) are cleaved as a signal peptide. The Extracellular segment spans residues 41–163 (DRPPSPVNVT…GLDGERPLQT (123 aa)). Positions 43 to 136 (PPSPVNVTVT…PRVHFRTLKG (94 aa)) constitute a Fibronectin type-III domain. Residues asparagine 48 and asparagine 143 are each glycosylated (N-linked (GlcNAc...) asparagine). The disordered stretch occupies residues 118-156 (GLRGESPPGPRVHFRTLKGSDRLPSNSSSPGDITVEGLD). Residues 164–184 (GEVVIIVVVLLMWAAVIGLFC) traverse the membrane as a helical segment. The Cytoplasmic segment spans residues 185–230 (RQYDIIKDNDSNNNPKEKGKGPEQSPQGRPVGTRQKKSPSINTIDV). Residues 193 to 205 (NDSNNNPKEKGKG) are compositionally biased toward basic and acidic residues. Residues 193–230 (NDSNNNPKEKGKGPEQSPQGRPVGTRQKKSPSINTIDV) form a disordered region.

It localises to the membrane. The protein localises to the secreted. Functionally, has anti-inflammatory properties. In the colon, acts on macrophages to down-regulate inflammation. May suppress osteoclastogenesis and mature osteoclast resorptive function. In white adipose tissue, decreases local inflammation, via interaction with GPR116. Also required for proper systemic glucose tolerance, specifically sensitizing white adipocytes to insulin and promoting glucose uptake. The insulin sensitizing function in adipose tissue is mediated by interaction with ADGRF5/GPR116 and activation of cAMP signaling. This is Fibronectin type III domain-containing protein 4 (FNDC4) from Bos taurus (Bovine).